The primary structure comprises 184 residues: Glutathione-regulated potassium-efflux system ancillary protein KefG (184 aa).

The protein belongs to the NAD(P)H dehydrogenase (quinone) family. KefG subfamily. In terms of assembly, interacts with KefB.

The protein localises to the cell inner membrane. It carries out the reaction a quinone + NADH + H(+) = a quinol + NAD(+). The catalysed reaction is a quinone + NADPH + H(+) = a quinol + NADP(+). Regulatory subunit of a potassium efflux system that confers protection against electrophiles. Required for full activity of KefB. The sequence is that of Glutathione-regulated potassium-efflux system ancillary protein KefG from Escherichia coli O8 (strain IAI1).